A 452-amino-acid chain; its full sequence is Cytochrome b-c1 complex subunit 2, mitochondrial (452 aa).

Residues 1 to 14 constitute a mitochondrion transit peptide; sequence MKLLSRAGSFSRFY. N6-acetyllysine occurs at positions 65, 198, and 249. Residue Ser-367 is modified to Phosphoserine.

Belongs to the peptidase M16 family. UQCRC2/QCR2 subfamily. As to quaternary structure, component of the ubiquinol-cytochrome c oxidoreductase (cytochrome b-c1 complex, complex III, CIII), a multisubunit enzyme composed of 11 subunits. The complex is composed of 3 respiratory subunits cytochrome b, cytochrome c1 and Rieske protein UQCRFS1, 2 core protein subunits UQCRC1/QCR1 and UQCRC2/QCR2, and 6 low-molecular weight protein subunits UQCRH/QCR6, UQCRB/QCR7, UQCRQ/QCR8, UQCR10/QCR9, UQCR11/QCR10 and subunit 9, the cleavage product of Rieske protein UQCRFS1. The complex exists as an obligatory dimer and forms supercomplexes (SCs) in the inner mitochondrial membrane with NADH-ubiquinone oxidoreductase (complex I, CI) and cytochrome c oxidase (complex IV, CIV), resulting in different assemblies (supercomplex SCI(1)III(2)IV(1) and megacomplex MCI(2)III(2)IV(2)). Interacts with RAB5IF. Interacts with STMP1. Expressed in the head region and flagellum of epididymal sperm.

It is found in the mitochondrion inner membrane. Component of the ubiquinol-cytochrome c oxidoreductase, a multisubunit transmembrane complex that is part of the mitochondrial electron transport chain which drives oxidative phosphorylation. The respiratory chain contains 3 multisubunit complexes succinate dehydrogenase (complex II, CII), ubiquinol-cytochrome c oxidoreductase (cytochrome b-c1 complex, complex III, CIII) and cytochrome c oxidase (complex IV, CIV), that cooperate to transfer electrons derived from NADH and succinate to molecular oxygen, creating an electrochemical gradient over the inner membrane that drives transmembrane transport and the ATP synthase. The cytochrome b-c1 complex catalyzes electron transfer from ubiquinol to cytochrome c, linking this redox reaction to translocation of protons across the mitochondrial inner membrane, with protons being carried across the membrane as hydrogens on the quinol. In the process called Q cycle, 2 protons are consumed from the matrix, 4 protons are released into the intermembrane space and 2 electrons are passed to cytochrome c. The 2 core subunits UQCRC1/QCR1 and UQCRC2/QCR2 are homologous to the 2 mitochondrial-processing peptidase (MPP) subunits beta-MPP and alpha-MPP respectively, and they seem to have preserved their MPP processing properties. May be involved in the in situ processing of UQCRFS1 into the mature Rieske protein and its mitochondrial targeting sequence (MTS)/subunit 9 when incorporated into complex III. In Rattus norvegicus (Rat), this protein is Cytochrome b-c1 complex subunit 2, mitochondrial (Uqcrc2).